Consider the following 197-residue polypeptide: Nucleoid occlusion factor SlmA (197 aa).

Residues 7–67 enclose the HTH tetR-type domain; it reads INRREHILQC…GLIEFIEESL (61 aa). Positions 30-49 form a DNA-binding region, H-T-H motif; sequence TTAKLASEVGVSEAALYRHF.

This sequence belongs to the nucleoid occlusion factor SlmA family. As to quaternary structure, homodimer. Interacts with FtsZ.

It is found in the cytoplasm. Its subcellular location is the nucleoid. Its function is as follows. Required for nucleoid occlusion (NO) phenomenon, which prevents Z-ring formation and cell division over the nucleoid. Acts as a DNA-associated cell division inhibitor that binds simultaneously chromosomal DNA and FtsZ, and disrupts the assembly of FtsZ polymers. SlmA-DNA-binding sequences (SBS) are dispersed on non-Ter regions of the chromosome, preventing FtsZ polymerization at these regions. This Shewanella sp. (strain MR-7) protein is Nucleoid occlusion factor SlmA.